The sequence spans 524 residues: Cytochrome P450 1A1 (524 aa).

The tract at residues 33–44 is mitochondrial targeting signal; it reads WQPRLPKGLKSP. O-linked (GlcNAc) serine glycosylation is present at serine 71. Phenylalanine 228 serves as a coordination point for substrate. A heme-binding site is contributed by cysteine 461.

It belongs to the cytochrome P450 family. As to quaternary structure, interacts with cytosolic chaperones HSP70 and HSP90; this interaction is required for initial targeting to mitochondria. Interacts (via mitochondrial targeting signal) with TOMM40 (via N-terminus); this interaction is required for translocation across the mitochondrial outer membrane. Heme is required as a cofactor.

Its subcellular location is the endoplasmic reticulum membrane. The protein resides in the mitochondrion inner membrane. It is found in the microsome membrane. The protein localises to the cytoplasm. It catalyses the reaction an organic molecule + reduced [NADPH--hemoprotein reductase] + O2 = an alcohol + oxidized [NADPH--hemoprotein reductase] + H2O + H(+). The catalysed reaction is estrone + reduced [NADPH--hemoprotein reductase] + O2 = 2-hydroxyestrone + oxidized [NADPH--hemoprotein reductase] + H2O + H(+). The enzyme catalyses estrone + reduced [NADPH--hemoprotein reductase] + O2 = 4-hydroxyestrone + oxidized [NADPH--hemoprotein reductase] + H2O + H(+). It carries out the reaction estrone + reduced [NADPH--hemoprotein reductase] + O2 = 6alpha-hydroxyestrone + oxidized [NADPH--hemoprotein reductase] + H2O + H(+). It catalyses the reaction estrone + reduced [NADPH--hemoprotein reductase] + O2 = 15alpha-hydroxyestrone + oxidized [NADPH--hemoprotein reductase] + H2O + H(+). The catalysed reaction is estrone + reduced [NADPH--hemoprotein reductase] + O2 = 16alpha-hydroxyestrone + oxidized [NADPH--hemoprotein reductase] + H2O + H(+). The enzyme catalyses 17beta-estradiol + reduced [NADPH--hemoprotein reductase] + O2 = 2-hydroxy-17beta-estradiol + oxidized [NADPH--hemoprotein reductase] + H2O + H(+). It carries out the reaction 17beta-estradiol + reduced [NADPH--hemoprotein reductase] + O2 = 4-hydroxy-17beta-estradiol + oxidized [NADPH--hemoprotein reductase] + H2O + H(+). It catalyses the reaction 17beta-estradiol + reduced [NADPH--hemoprotein reductase] + O2 = 6alpha-hydroxy-17beta-estradiol + oxidized [NADPH--hemoprotein reductase] + H2O + H(+). The catalysed reaction is 17beta-estradiol + reduced [NADPH--hemoprotein reductase] + O2 = 7alpha-hydroxy-17beta-estradiol + oxidized [NADPH--hemoprotein reductase] + H2O + H(+). The enzyme catalyses 17beta-estradiol + reduced [NADPH--hemoprotein reductase] + O2 = 15alpha-hydroxy-17beta-estradiol + oxidized [NADPH--hemoprotein reductase] + H2O + H(+). It carries out the reaction (5Z,8Z,11Z)-eicosatrienoate + reduced [NADPH--hemoprotein reductase] + O2 = 19-hydroxy-(5Z,8Z,11Z)-eicosatrienoate + oxidized [NADPH--hemoprotein reductase] + H2O + H(+). It catalyses the reaction (5Z,8Z,11Z,14Z)-eicosatetraenoate + reduced [NADPH--hemoprotein reductase] + O2 = 16-hydroxy-(5Z,8Z,11Z,14Z)-eicosatetraenoate + oxidized [NADPH--hemoprotein reductase] + H2O + H(+). The catalysed reaction is (5Z,8Z,11Z,14Z)-eicosatetraenoate + reduced [NADPH--hemoprotein reductase] + O2 = 17-hydroxy-(5Z,8Z,11Z,14Z)-eicosatetraenoate + oxidized [NADPH--hemoprotein reductase] + H2O + H(+). The enzyme catalyses (5Z,8Z,11Z,14Z)-eicosatetraenoate + reduced [NADPH--hemoprotein reductase] + O2 = 18-hydroxy-(5Z,8Z,11Z,14Z)-eicosatetraenoate + oxidized [NADPH--hemoprotein reductase] + H2O + H(+). It carries out the reaction (5Z,8Z,11Z,14Z)-eicosatetraenoate + reduced [NADPH--hemoprotein reductase] + O2 = 19-hydroxy-(5Z,8Z,11Z,14Z)-eicosatetraenoate + oxidized [NADPH--hemoprotein reductase] + H2O + H(+). It catalyses the reaction (5Z,8Z,11Z,14Z,17Z)-eicosapentaenoate + reduced [NADPH--hemoprotein reductase] + O2 = 19-hydroxy-(5Z,8Z,11Z,14Z,17Z)-eicosapentaenoate + oxidized [NADPH--hemoprotein reductase] + H2O + H(+). The catalysed reaction is (5Z,8Z,11Z,14Z)-eicosatetraenoate + reduced [NADPH--hemoprotein reductase] + O2 = (8R,9S)-epoxy-(5Z,11Z,14Z)-eicosatrienoate + oxidized [NADPH--hemoprotein reductase] + H2O + H(+). The enzyme catalyses (5Z,8Z,11Z,14Z)-eicosatetraenoate + reduced [NADPH--hemoprotein reductase] + O2 = (11R,12S)-epoxy-(5Z,8Z,14Z)-eicosatrienoate + oxidized [NADPH--hemoprotein reductase] + H2O + H(+). It carries out the reaction (5Z,8Z,11Z,14Z)-eicosatetraenoate + reduced [NADPH--hemoprotein reductase] + O2 = (14S,15R)-epoxy-(5Z,8Z,11Z)-eicosatrienoate + oxidized [NADPH--hemoprotein reductase] + H2O + H(+). It catalyses the reaction (5Z,8Z,11Z,14Z)-eicosatetraenoate + reduced [NADPH--hemoprotein reductase] + O2 = (14R,15S)-epoxy-(5Z,8Z,11Z)-eicosatrienoate + oxidized [NADPH--hemoprotein reductase] + H2O + H(+). The catalysed reaction is (5Z,8Z,11Z,14Z,17Z)-eicosapentaenoate + reduced [NADPH--hemoprotein reductase] + O2 = (17R,18S)-epoxy-(5Z,8Z,11Z,14Z)-eicosatetraenoate + oxidized [NADPH--hemoprotein reductase] + H2O + H(+). The enzyme catalyses (4Z,7Z,10Z,13Z,16Z,19Z)-docosahexaenoate + reduced [NADPH--hemoprotein reductase] + O2 = (19S,20R)-epoxy-(4Z,7Z,10Z,13Z,16Z)-docosapentaenoate + oxidized [NADPH--hemoprotein reductase] + H2O + H(+). It carries out the reaction (4Z,7Z,10Z,13Z,16Z,19Z)-docosahexaenoate + reduced [NADPH--hemoprotein reductase] + O2 = (19R,20S)-epoxy-(4Z,7Z,10Z,13Z,16Z)-docosapentaenoate + oxidized [NADPH--hemoprotein reductase] + H2O + H(+). It catalyses the reaction all-trans-retinol + reduced [NADPH--hemoprotein reductase] + O2 = all-trans-retinal + oxidized [NADPH--hemoprotein reductase] + 2 H2O + H(+). The catalysed reaction is all-trans-retinal + reduced [NADPH--hemoprotein reductase] + O2 = all-trans-retinoate + oxidized [NADPH--hemoprotein reductase] + H2O + 2 H(+). The enzyme catalyses (13S)-hydroperoxy-(9Z,11E)-octadecadienoate = 13-oxo-(9Z,11E)-octadecadienoate + H2O. It carries out the reaction (12S)-hydroperoxy-(5Z,8Z,10E,14Z)-eicosatetraenoate = 12-oxo-(5Z,8Z,10E,14Z)-eicosatetraenoate + H2O. It catalyses the reaction (15S)-hydroperoxy-(5Z,8Z,11Z,13E)-eicosatetraenoate = 15-oxo-(5Z,8Z,11Z,13E)-eicosatetraenoate + H2O. The catalysed reaction is (5S)-hydroperoxy-(6E,8Z,11Z,14Z)-eicosatetraenoate = 5-oxo-(6E,8Z,11Z,14Z)-eicosatetraenoate + H2O. The protein operates within steroid hormone biosynthesis. Its pathway is lipid metabolism; fatty acid metabolism. It participates in cofactor metabolism; retinol metabolism. A cytochrome P450 monooxygenase involved in the metabolism of various endogenous substrates, including fatty acids, steroid hormones and vitamins. Mechanistically, uses molecular oxygen inserting one oxygen atom into a substrate, and reducing the second into a water molecule, with two electrons provided by NADPH via cytochrome P450 reductase (CPR; NADPH-ferrihemoprotein reductase). Catalyzes the hydroxylation of carbon-hydrogen bonds. Exhibits high catalytic activity for the formation of hydroxyestrogens from estrone (E1) and 17beta-estradiol (E2), namely 2-hydroxy E1 and E2, as well as D-ring hydroxylated E1 and E2 at the C15alpha and C16alpha positions. Displays different regioselectivities for polyunsaturated fatty acids (PUFA) hydroxylation. Catalyzes the epoxidation of double bonds of certain PUFA. Converts arachidonic acid toward epoxyeicosatrienoic acid (EET) regioisomers, 8,9-, 11,12-, and 14,15-EET, that function as lipid mediators in the vascular system. Displays an absolute stereoselectivity in the epoxidation of eicosapentaenoic acid (EPA) producing the 17(R),18(S) enantiomer. May play an important role in all-trans retinoic acid biosynthesis in extrahepatic tissues. Catalyzes two successive oxidative transformation of all-trans retinol to all-trans retinal and then to the active form all-trans retinoic acid. May also participate in eicosanoids metabolism by converting hydroperoxide species into oxo metabolites (lipoxygenase-like reaction, NADPH-independent). This chain is Cytochrome P450 1A1 (CYP1A1), found in Canis lupus familiaris (Dog).